We begin with the raw amino-acid sequence, 101 residues long: Apolipoprotein C-II (101 aa).

The N-terminal stretch at 1–22 (MGTRFLLALFLVLLVLGFEVQG) is a signal peptide. A lipid binding region spans residues 66–74 (TVDEKLRDM). The tract at residues 78–101 (STAAMSTYAGILTDQVLSMLKGEE) is lipoprotein lipase cofactor.

This sequence belongs to the apolipoprotein C2 family. In terms of processing, proapolipoprotein C-II is synthesized as a sialic acid containing glycoprotein which is subsequently desialylated prior to its proteolytic processing. Post-translationally, proapolipoprotein C-II, the major form found in plasma undergoes proteolytic cleavage of its N-terminal hexapeptide to generate apolipoprotein C-II, which occurs as the minor form in plasma.

Its subcellular location is the secreted. Its function is as follows. Component of chylomicrons, very low-density lipoproteins (VLDL), low-density lipoproteins (LDL), and high-density lipoproteins (HDL) in plasma. Plays an important role in lipoprotein metabolism as an activator of lipoprotein lipase. Both proapolipoprotein C-II and apolipoprotein C-II can activate lipoprotein lipase. This Aotus nancymaae (Ma's night monkey) protein is Apolipoprotein C-II (APOC2).